The following is a 128-amino-acid chain: Large ribosomal subunit protein bL17 (128 aa).

This sequence belongs to the bacterial ribosomal protein bL17 family. In terms of assembly, part of the 50S ribosomal subunit. Contacts protein L32.

This is Large ribosomal subunit protein bL17 from Streptococcus equi subsp. equi (strain 4047).